The following is a 511-amino-acid chain: Maturase K (511 aa).

It belongs to the intron maturase 2 family. MatK subfamily.

The protein resides in the plastid. Its subcellular location is the chloroplast. Functionally, usually encoded in the trnK tRNA gene intron. Probably assists in splicing its own and other chloroplast group II introns. The protein is Maturase K of Campsis radicans (Trumpet creeper).